A 309-amino-acid polypeptide reads, in one-letter code: Taste receptor type 2 member 46 (309 aa).

Residue M1 is a topological domain, extracellular. Residues 2-22 (ITFLPIIFSILIVVTFVIGNF) traverse the membrane as a helical segment. The Cytoplasmic portion of the chain corresponds to 23–46 (ANGFIALVNSIEWFKRQKISFADQ). A helical membrane pass occupies residues 47–67 (ILTALAVSRVGLLWVLVLNWY). The Extracellular portion of the chain corresponds to 68-86 (ATELNPAFNSIEVRITAYN). The chain crosses the membrane as a helical span at residues 87–107 (VWAVINHFSNWLATSLSIFYL). Over 108-126 (LKIANFSNLIFLHLKRRVK) the chain is Cytoplasmic. The chain crosses the membrane as a helical span at residues 127-147 (SVVLVILLGPLLFLVCHLFVI). Topologically, residues 148-178 (NMNQIIWTKEYEGNMTWKIKLRSAMYLSNTT) are extracellular. 2 N-linked (GlcNAc...) asparagine glycosylation sites follow: N161 and N176. The helical transmembrane segment at 179-199 (VTILANLVPFTLTLISFLLLI) threads the bilayer. Over 200–229 (CSLCKHLKKMQLHGKGSQDPSMKVHIKALQ) the chain is Cytoplasmic. The chain crosses the membrane as a helical span at residues 230–250 (TVTSFLLLCAIYFLSIIMSVW). At 251 to 259 (SFESLENKP) the chain is on the extracellular side. A helical transmembrane segment spans residues 260-280 (VFMFCEAIAFSYPSTHPFILI). Residues 281–309 (WGNKKLKQTFLSVLWHVRYWVKGEKPSSS) lie on the Cytoplasmic side of the membrane.

Belongs to the G-protein coupled receptor T2R family. As to expression, expressed in subsets of taste receptor cells of the tongue and exclusively in gustducin-positive cells. Expressed on ciliated airway epithelium.

The protein localises to the membrane. Its subcellular location is the cell projection. It is found in the cilium membrane. In terms of biological role, receptor that may play a role in the perception of bitterness and is gustducin-linked. May play a role in sensing the chemical composition of the gastrointestinal content. The activity of this receptor may stimulate alpha gustducin, mediate PLC-beta-2 activation and lead to the gating of TRPM5. In airway epithelial cells, binding of bitter compounds increases the intracellular calcium ion concentration and stimulates ciliary beat frequency. This Homo sapiens (Human) protein is Taste receptor type 2 member 46 (TAS2R46).